The primary structure comprises 444 residues: Elongation factor 1-alpha (444 aa).

The tr-type G domain maps to 15–238 (KPHINLAVVG…DSFQPPQRPV (224 aa)). The G1 stretch occupies residues 24-31 (GHVDNGKS). A GTP-binding site is contributed by 24 to 31 (GHVDNGKS). Ser31 contributes to the Mg(2+) binding site. Residues 80–84 (GVTIE) are G2. Residues 101–104 (DLPG) form a G3 region. GTP contacts are provided by residues 101–105 (DLPGH) and 163–166 (NKMD). The tract at residues 163-166 (NKMD) is G4. The tract at residues 202-204 (SAI) is G5.

Belongs to the TRAFAC class translation factor GTPase superfamily. Classic translation factor GTPase family. EF-Tu/EF-1A subfamily.

It localises to the cytoplasm. It carries out the reaction GTP + H2O = GDP + phosphate + H(+). Functionally, GTP hydrolase that promotes the GTP-dependent binding of aminoacyl-tRNA to the A-site of ribosomes during protein biosynthesis. In Pyrobaculum aerophilum (strain ATCC 51768 / DSM 7523 / JCM 9630 / CIP 104966 / NBRC 100827 / IM2), this protein is Elongation factor 1-alpha.